Consider the following 147-residue polypeptide: Nucleoside diphosphate kinase (147 aa).

The ATP site is built by Lys11, Phe59, Arg87, Thr93, Arg104, and Asn114. His117 acts as the Pros-phosphohistidine intermediate in catalysis.

This sequence belongs to the NDK family. Homotetramer. Requires Mg(2+) as cofactor.

The protein resides in the cytoplasm. It catalyses the reaction a 2'-deoxyribonucleoside 5'-diphosphate + ATP = a 2'-deoxyribonucleoside 5'-triphosphate + ADP. It carries out the reaction a ribonucleoside 5'-diphosphate + ATP = a ribonucleoside 5'-triphosphate + ADP. Its function is as follows. Major role in the synthesis of nucleoside triphosphates other than ATP. The ATP gamma phosphate is transferred to the NDP beta phosphate via a ping-pong mechanism, using a phosphorylated active-site intermediate. The chain is Nucleoside diphosphate kinase from Anaeromyxobacter dehalogenans (strain 2CP-C).